Consider the following 651-residue polypeptide: Protein numb homolog (651 aa).

Residues 33-193 (RTGKCSFPVK…ASRTTFTREG (161 aa)) form the PID domain. Thr-102 carries the post-translational modification Phosphothreonine; by AAK1. The residue at position 194 (Ser-194) is a Phosphoserine. Positions 228–255 (SSVAPGNTAPSPSSPTSPTSDATTSLEM) are disordered. Residues 235–252 (TAPSPSSPTSPTSDATTS) are compositionally biased toward low complexity. Phosphothreonine is present on Thr-243. Ser-244 bears the Phosphoserine mark. Phosphoserine; by CaMK1 is present on residues Ser-276 and Ser-295. Disordered stretches follow at residues 419–483 (QSSG…SPFQ) and 623–651 (LENK…EIEL). Ser-425 is modified (phosphoserine). At Thr-436 the chain carries Phosphothreonine. Positions 436–449 (TPSEADRWLEEVSK) are enriched in basic and acidic residues. At Ser-438 the chain carries Phosphoserine. A compositionally biased stretch (low complexity) spans 453–466 (AQQPQASAAPLQPV). Residues 630-644 (RTNPSPTNPFSSDLQ) show a composition bias toward polar residues. Ser-634 carries the phosphoserine modification.

As to quaternary structure, interacts with SIAH1. Interacts with LNX. Interacts with CDH1. Interacts with TFAP2A and TFAP2B. Interacts with RALBP1 in a complex also containing EPN1 and TFAP2A during interphase and mitosis. Interacts with AAK1. May interact with DUOXA1. Phosphorylated on Ser-276 and Ser-295 by CaMK1. Post-translationally, isoform 1 and isoform 2 are ubiquitinated by LNX leading to their subsequent proteasomal degradation. Ubiquitinated; mediated by SIAH1 and leading to its subsequent proteasomal degradation.

It is found in the cell membrane. The protein resides in the endosome membrane. In terms of biological role, regulates clathrin-mediated receptor endocytosis. Plays a role in the process of neurogenesis. Required throughout embryonic neurogenesis to maintain neural progenitor cells, also called radial glial cells (RGCs), by allowing their daughter cells to choose progenitor over neuronal cell fate. Not required for the proliferation of neural progenitor cells before the onset of neurogenesis. Also involved postnatally in the subventricular zone (SVZ) neurogenesis by regulating SVZ neuroblasts survival and ependymal wall integrity. May also mediate local repair of brain ventricular wall damage. The protein is Protein numb homolog of Homo sapiens (Human).